Here is a 336-residue protein sequence, read N- to C-terminus: Glycerol-3-phosphate dehydrogenase [NAD(P)+] (336 aa).

Residues S14, W15, R35, R36, and K109 each coordinate NADPH. Sn-glycerol 3-phosphate contacts are provided by K109 and G139. A143 is a binding site for NADPH. Residues K194, D247, S257, R258, and N259 each contribute to the sn-glycerol 3-phosphate site. The Proton acceptor role is filled by K194. Residue R258 participates in NADPH binding. Residue E284 participates in NADPH binding.

This sequence belongs to the NAD-dependent glycerol-3-phosphate dehydrogenase family.

It is found in the cytoplasm. The catalysed reaction is sn-glycerol 3-phosphate + NAD(+) = dihydroxyacetone phosphate + NADH + H(+). It catalyses the reaction sn-glycerol 3-phosphate + NADP(+) = dihydroxyacetone phosphate + NADPH + H(+). The protein operates within membrane lipid metabolism; glycerophospholipid metabolism. Its function is as follows. Catalyzes the reduction of the glycolytic intermediate dihydroxyacetone phosphate (DHAP) to sn-glycerol 3-phosphate (G3P), the key precursor for phospholipid synthesis. In Streptomyces griseus subsp. griseus (strain JCM 4626 / CBS 651.72 / NBRC 13350 / KCC S-0626 / ISP 5235), this protein is Glycerol-3-phosphate dehydrogenase [NAD(P)+].